Reading from the N-terminus, the 504-residue chain is Ent-kaurene oxidase-like 3 (504 aa).

The helical transmembrane segment at 3–23 threads the bilayer; it reads SLLAAGAGGIGVAAAAVGGFI. Cysteine 448 is a binding site for heme.

It belongs to the cytochrome P450 family. Heme serves as cofactor. In terms of tissue distribution, expressed in leaf blades.

The protein resides in the membrane. May hydroxylate diterpenes. The protein is Ent-kaurene oxidase-like 3 of Oryza sativa subsp. japonica (Rice).